The sequence spans 253 residues: Protein C1orf43 (253 aa).

Residues 11-31 form a helical membrane-spanning segment; that stretch reads VNVVLVMAYGSLVFVLLFIFV.

The protein resides in the membrane. It is found in the golgi apparatus. It localises to the mitochondrion. General regulator of phagocytosis. Required to uptake Gram negative bacterium by macrophages. This Homo sapiens (Human) protein is Protein C1orf43 (C1orf43).